The primary structure comprises 267 residues: Octanoyltransferase (267 aa).

Residues 1 to 30 are disordered; that stretch reads MPTGKLRQKPPYAAIMTNSPVTPSTETQQP. The span at 16–28 shows a compositional bias: polar residues; the sequence is MTNSPVTPSTETQ. The 189-residue stretch at 77 to 265 folds into the BPL/LPL catalytic domain; it reads GTASELVWLV…AFESVFGPRQ (189 aa). Residues 116-123, 196-198, and 209-211 contribute to the substrate site; these read RGGEYTYH, AIG, and GIA. The active-site Acyl-thioester intermediate is Cys-227.

Belongs to the LipB family.

Its subcellular location is the cytoplasm. It carries out the reaction octanoyl-[ACP] + L-lysyl-[protein] = N(6)-octanoyl-L-lysyl-[protein] + holo-[ACP] + H(+). The protein operates within protein modification; protein lipoylation via endogenous pathway; protein N(6)-(lipoyl)lysine from octanoyl-[acyl-carrier-protein]: step 1/2. In terms of biological role, catalyzes the transfer of endogenously produced octanoic acid from octanoyl-acyl-carrier-protein onto the lipoyl domains of lipoate-dependent enzymes. Lipoyl-ACP can also act as a substrate although octanoyl-ACP is likely to be the physiological substrate. The polypeptide is Octanoyltransferase (Brucella abortus biovar 1 (strain 9-941)).